The sequence spans 351 residues: Hydroxymethylglutaryl-CoA synthase (351 aa).

Residue Asp30 coordinates (3S)-3-hydroxy-3-methylglutaryl-CoA. Glu82 functions as the Proton donor/acceptor in the catalytic mechanism. The (3S)-3-hydroxy-3-methylglutaryl-CoA site is built by Cys114, Ser155, Thr203, and His236. Cys114 (acyl-thioester intermediate) is an active-site residue. Catalysis depends on His236, which acts as the Proton donor/acceptor. Residue Arg241 coordinates CoA. Positions 245, 268, and 298 each coordinate (3S)-3-hydroxy-3-methylglutaryl-CoA.

This sequence belongs to the thiolase-like superfamily. Archaeal HMG-CoA synthase family. Interacts with acetoacetyl-CoA thiolase that catalyzes the precedent step in the pathway and with a DUF35 protein. The acetoacetyl-CoA thiolase/HMG-CoA synthase complex channels the intermediate via a fused CoA-binding site, which allows for efficient coupling of the endergonic thiolase reaction with the exergonic HMGCS reaction.

It carries out the reaction acetoacetyl-CoA + acetyl-CoA + H2O = (3S)-3-hydroxy-3-methylglutaryl-CoA + CoA + H(+). It functions in the pathway metabolic intermediate biosynthesis; (R)-mevalonate biosynthesis; (R)-mevalonate from acetyl-CoA: step 2/3. In terms of biological role, catalyzes the condensation of acetyl-CoA with acetoacetyl-CoA to form 3-hydroxy-3-methylglutaryl-CoA (HMG-CoA). Functions in the mevalonate (MVA) pathway leading to isopentenyl diphosphate (IPP), a key precursor for the biosynthesis of isoprenoid compounds that are building blocks of archaeal membrane lipids. This Pyrobaculum neutrophilum (strain DSM 2338 / JCM 9278 / NBRC 100436 / V24Sta) (Thermoproteus neutrophilus) protein is Hydroxymethylglutaryl-CoA synthase.